Here is a 61-residue protein sequence, read N- to C-terminus: Short neurotoxin 4 (61 aa).

Cystine bridges form between C3–C23, C17–C40, C42–C53, and C54–C59.

The protein belongs to the three-finger toxin family. Short-chain subfamily. Type I alpha-neurotoxin sub-subfamily. Expressed by the venom gland.

The protein localises to the secreted. In terms of biological role, binds to muscle nicotinic acetylcholine receptor (nAChR) and inhibit acetylcholine from binding to the receptor, thereby impairing neuromuscular transmission. This is Short neurotoxin 4 from Naja annulifera (Banded Egyptian cobra).